A 248-amino-acid polypeptide reads, in one-letter code: MTLKRIFCAALALIVLQSVASAVDYCRLSCPEGRDHVGCRNAGFGAHCGSNPQTPKLHQEHIKMVLQKTNWLRGVVAEGSFCYPKAARMPVLVWDDELANLAALHTKGCVTETNKCRSTERFHSPGQSSYEISGDTLPSAMDILNFALRDWYLQKDNLTREDIGSYPAGEDKGLKNMANLISDKVTAIGCGLAQWRKENYKGAFHCSLLFIERSRSSIYQRGDNFATNCLKTHPTYRAGVLSDEQYSN.

Positions 1 to 22 (MTLKRIFCAALALIVLQSVASA) are cleaved as a signal peptide. The region spanning 66-208 (LQKTNWLRGV…NYKGAFHCSL (143 aa)) is the SCP domain. The Cell attachment site signature appears at 221–223 (RGD).

The protein belongs to the CRISP family. As to expression, expressed in salivary glands.

The protein localises to the secreted. Inhibits platelet aggregation induced by all agonists tested (ADP, arachidonic acid, the thromboxane A2 analog U46619, thrombin, and snake venom snaclecs (TMVA that activates platelet through GPIB, and stejnulxin that specifically acts through GPVI (GP6))). May act by competing with fibrinogen for binding to glycoprotein IIb/IIIa (ITGA2B/ITGB3). This chain is Tabinhibitin 10, found in Tabanus yao (Horsefly).